A 370-amino-acid polypeptide reads, in one-letter code: Anhydro-N-acetylmuramic acid kinase (370 aa).

An ATP-binding site is contributed by 13–20 (GTSMDGVD).

Belongs to the anhydro-N-acetylmuramic acid kinase family.

It carries out the reaction 1,6-anhydro-N-acetyl-beta-muramate + ATP + H2O = N-acetyl-D-muramate 6-phosphate + ADP + H(+). It participates in amino-sugar metabolism; 1,6-anhydro-N-acetylmuramate degradation. The protein operates within cell wall biogenesis; peptidoglycan recycling. Functionally, catalyzes the specific phosphorylation of 1,6-anhydro-N-acetylmuramic acid (anhMurNAc) with the simultaneous cleavage of the 1,6-anhydro ring, generating MurNAc-6-P. Is required for the utilization of anhMurNAc either imported from the medium or derived from its own cell wall murein, and thus plays a role in cell wall recycling. This Shewanella denitrificans (strain OS217 / ATCC BAA-1090 / DSM 15013) protein is Anhydro-N-acetylmuramic acid kinase.